The chain runs to 71 residues: Small ribosomal subunit protein bS21 (71 aa).

Belongs to the bacterial ribosomal protein bS21 family.

The chain is Small ribosomal subunit protein bS21 from Thioalkalivibrio sulfidiphilus (strain HL-EbGR7).